We begin with the raw amino-acid sequence, 1004 residues long: MATPMVSSAGGLLAMLNEPHPVLKLHALSNLNNLVDQFWPEISTSVPIIESLYEDEEFDLHQRQLAALLVSKVFYYLGELNDSLSYALGAGPLFDVSEDSDYVHTLLAKAIDEYASLRSKAVESNEMVDIDPRLEAIVERMLGKCISDGKYQQAMGIAIECRRLDKLEEAIIKSDNVQGTLSYCINVSHSFVNRREYRHEVLSLLVKVYQKLPSPDYLSICQCLMFLDEPQGVASILEKLLRSENKDDALLALQIAFDLVENEHQAFLLSVRDRLPAPKTRAVEATQAVETTIAPNENPSGDVQMADETPAQTIVHETDPVDATYAERLTKIKGILSGETSIQLTLQFLYSHNKSDLLILKTIKQSVEMRNSVCHSATIYANAIMHAGTTVDTFLRENLDWLSRATNWAKFSATAGLGVIHRGHLQQGRSLMAPYLPQGGAGGGGSPYSEGGALYALGLIHANHGEGIKQFLRDSLRSTNVEVIQHGACLGLGLSALGTADEEIYDDVKSVLYTDSAVAGEAAGISMGLLLVGTATEKASEMLAYAHETQHEKIIRGLALGIALTVYGREEGADTLIEQMTRDQDPIIRYGGMYALALAYSGTANNKAIRQLLHFAVSDVSDDVRRTAVLALGFVLYSDPEQTPRIVSLLSESYNPHVRYGAALAVGISCAGTGLSEAISLLEPLTSDVVDFVRQGALIAMAMVMVQISEASDSRVGVFRRQLEKIILDKHEDTMSKMGAILASGILDAGGRNVTIRLLSKTKHDKVTAVIGLAVFSQFWYWYPLIYFISLAFSPTAFIGLNYDLKVPKFEFMSHAKPSLFEYPKPTTVPTANTAVKLPTAVLSTSVKAKARAKKEAEQKAIAEKTSGPEKPVNESGSGKGKASTEKEGDSMQVDSPAAVEKKAPEPEPAFEILVNPARVVPAQEKYIKLLDDSRYVPVKLAPSGFVLLKDLREHEPEVLSLTDAPTSTASPATGTAAAAQGTPASAMAVDDEPQPPQAFEYAS.

N-acetylalanine is present on A2. K166 is covalently cross-linked (Glycyl lysine isopeptide (Lys-Gly) (interchain with G-Cter in ubiquitin)). 10 PC repeats span residues 412–447 (SATA…GGSP), 452–485 (GALY…EVIQ), 487–521 (GACL…VAGE), 522–555 (AAGI…EKII), 557–590 (GLAL…IIRY), 591–626 (GGMY…DVRR), 627–659 (TAVL…PHVR), 661–695 (GAAL…FVRQ), 696–736 (GALI…DTMS), and 739–771 (GAIL…TAVI). Disordered stretches follow at residues 858 to 905 (EQKA…KKAP) and 959 to 1004 (VLSL…EYAS). A Phosphoserine modification is found at S896. Positions 965–987 (APTSTASPATGTAAAAQGTPASA) are enriched in low complexity.

This sequence belongs to the proteasome subunit S1 family. As to quaternary structure, component of the 19S regulatory particle (RP/PA700) base subcomplex of the 26S proteasome. The 26S proteasome is composed of a core protease (CP), known as the 20S proteasome, capped at one or both ends by the 19S regulatory particle (RP/PA700). The RP/PA700 complex is composed of at least 17 different subunits in two subcomplexes, the base and the lid, which form the portions proximal and distal to the 20S proteolytic core, respectively. In terms of tissue distribution, ubiquitous with highest expression in flowers.

In terms of biological role, acts as a regulatory subunit of the 26 proteasome which is involved in the ATP-dependent degradation of ubiquitinated proteins. This chain is 26S proteasome non-ATPase regulatory subunit 1 homolog A (RPN2A), found in Arabidopsis thaliana (Mouse-ear cress).